Here is a 154-residue protein sequence, read N- to C-terminus: MAFNLPRIRNKSEVSNDLMRRNHLDNIFDDFFNEFYTFPYSSSTEKNLIPRTDISETDSGYSLEVELPGINQKDIDINIDNHILTIKGQKEEKSEEKNKNYHMRERYYGSFQRSISLPANINDDAINARFENGILHITIPKKEQGKTRKIEVKG.

Residues 43-154 form the sHSP domain; sequence STEKNLIPRT…GKTRKIEVKG (112 aa).

This sequence belongs to the small heat shock protein (HSP20) family.

The chain is Small heat shock protein C2 (hspC2) from Rickettsia felis (strain ATCC VR-1525 / URRWXCal2) (Rickettsia azadi).